Reading from the N-terminus, the 62-residue chain is Photosystem II reaction center protein Z (62 aa).

2 consecutive transmembrane segments (helical) span residues 8 to 28 (AVFA…LVFA) and 41 to 61 (FSGT…NSLI).

This sequence belongs to the PsbZ family. PSII is composed of 1 copy each of membrane proteins PsbA, PsbB, PsbC, PsbD, PsbE, PsbF, PsbH, PsbI, PsbJ, PsbK, PsbL, PsbM, PsbT, PsbY, PsbZ, Psb30/Ycf12, at least 3 peripheral proteins of the oxygen-evolving complex and a large number of cofactors. It forms dimeric complexes.

The protein localises to the plastid. It is found in the chloroplast thylakoid membrane. May control the interaction of photosystem II (PSII) cores with the light-harvesting antenna, regulates electron flow through the 2 photosystem reaction centers. PSII is a light-driven water plastoquinone oxidoreductase, using light energy to abstract electrons from H(2)O, generating a proton gradient subsequently used for ATP formation. This is Photosystem II reaction center protein Z from Oryza nivara (Indian wild rice).